A 129-amino-acid chain; its full sequence is Large ribosomal subunit protein bL19 (129 aa).

Belongs to the bacterial ribosomal protein bL19 family.

This protein is located at the 30S-50S ribosomal subunit interface and may play a role in the structure and function of the aminoacyl-tRNA binding site. The sequence is that of Large ribosomal subunit protein bL19 from Rhizorhabdus wittichii (strain DSM 6014 / CCUG 31198 / JCM 15750 / NBRC 105917 / EY 4224 / RW1) (Sphingomonas wittichii).